A 339-amino-acid polypeptide reads, in one-letter code: Glycerol-3-phosphate dehydrogenase [NAD(P)+] (339 aa).

NADPH is bound by residues serine 15, tyrosine 16, histidine 36, and lysine 110. Sn-glycerol 3-phosphate-binding residues include lysine 110, glycine 139, and threonine 141. Alanine 143 contacts NADPH. The sn-glycerol 3-phosphate site is built by lysine 195, aspartate 248, serine 258, arginine 259, and asparagine 260. Lysine 195 serves as the catalytic Proton acceptor. An NADPH-binding site is contributed by arginine 259. NADPH contacts are provided by valine 283 and glutamate 285.

This sequence belongs to the NAD-dependent glycerol-3-phosphate dehydrogenase family.

It is found in the cytoplasm. The catalysed reaction is sn-glycerol 3-phosphate + NAD(+) = dihydroxyacetone phosphate + NADH + H(+). It carries out the reaction sn-glycerol 3-phosphate + NADP(+) = dihydroxyacetone phosphate + NADPH + H(+). It functions in the pathway membrane lipid metabolism; glycerophospholipid metabolism. Its function is as follows. Catalyzes the reduction of the glycolytic intermediate dihydroxyacetone phosphate (DHAP) to sn-glycerol 3-phosphate (G3P), the key precursor for phospholipid synthesis. The protein is Glycerol-3-phosphate dehydrogenase [NAD(P)+] of Escherichia coli O17:K52:H18 (strain UMN026 / ExPEC).